The sequence spans 255 residues: ParA family protein CT_582 (255 aa).

Belongs to the ParA family.

This Chlamydia trachomatis serovar D (strain ATCC VR-885 / DSM 19411 / UW-3/Cx) protein is ParA family protein CT_582.